The sequence spans 488 residues: Ribulose bisphosphate carboxylase large chain 1 (488 aa).

N128 and T178 together coordinate substrate. K180 functions as the Proton acceptor in the catalytic mechanism. K182 contributes to the substrate binding site. Mg(2+) is bound by residues K206, D208, and E209. K206 bears the N6-carboxylysine mark. Residue H298 is the Proton acceptor of the active site. R299, H331, and S383 together coordinate substrate.

It belongs to the RuBisCO large chain family. Type I subfamily. In terms of assembly, heterohexadecamer of 8 large chains and 8 small chains. Requires Mg(2+) as cofactor.

The catalysed reaction is 2 (2R)-3-phosphoglycerate + 2 H(+) = D-ribulose 1,5-bisphosphate + CO2 + H2O. It carries out the reaction D-ribulose 1,5-bisphosphate + O2 = 2-phosphoglycolate + (2R)-3-phosphoglycerate + 2 H(+). Functionally, ruBisCO catalyzes two reactions: the carboxylation of D-ribulose 1,5-bisphosphate, the primary event in carbon dioxide fixation, as well as the oxidative fragmentation of the pentose substrate. Both reactions occur simultaneously and in competition at the same active site. The sequence is that of Ribulose bisphosphate carboxylase large chain 1 from Nitrobacter hamburgensis (strain DSM 10229 / NCIMB 13809 / X14).